Reading from the N-terminus, the 121-residue chain is Immunoglobulin heavy variable 6-1 (121 aa).

An N-terminal signal peptide occupies residues M1 to S20. The tract at residues Q21 to S45 is framework-1. The Ig-like domain occupies Q21–R121. C42 and C119 are disulfide-bonded. A complementarity-determining-1 region spans residues G46–A55. The tract at residues W56 to R72 is framework-2. The tract at residues T73–N81 is complementarity-determining-2. The framework-3 stretch occupies residues D82 to C119. The complementarity-determining-3 stretch occupies residues A120–R121.

As to quaternary structure, immunoglobulins are composed of two identical heavy chains and two identical light chains; disulfide-linked.

It localises to the secreted. The protein localises to the cell membrane. Its function is as follows. V region of the variable domain of immunoglobulin heavy chains that participates in the antigen recognition. Immunoglobulins, also known as antibodies, are membrane-bound or secreted glycoproteins produced by B lymphocytes. In the recognition phase of humoral immunity, the membrane-bound immunoglobulins serve as receptors which, upon binding of a specific antigen, trigger the clonal expansion and differentiation of B lymphocytes into immunoglobulins-secreting plasma cells. Secreted immunoglobulins mediate the effector phase of humoral immunity, which results in the elimination of bound antigens. The antigen binding site is formed by the variable domain of one heavy chain, together with that of its associated light chain. Thus, each immunoglobulin has two antigen binding sites with remarkable affinity for a particular antigen. The variable domains are assembled by a process called V-(D)-J rearrangement and can then be subjected to somatic hypermutations which, after exposure to antigen and selection, allow affinity maturation for a particular antigen. This is Immunoglobulin heavy variable 6-1 from Homo sapiens (Human).